The primary structure comprises 433 residues: Arabinooligosaccharide-binding protein (433 aa).

Positions 1–21 are cleaved as a signal peptide; that stretch reads MKKMTVCFLVLMMLLTLVIAG. Cysteine 22 is lipidated: N-palmitoyl cysteine. Cysteine 22 carries S-diacylglycerol cysteine lipidation.

It belongs to the bacterial solute-binding protein 1 family. As to quaternary structure, the complex is composed of two ATP-binding proteins (MsmX), two transmembrane proteins (AraP and AraQ) and a solute-binding protein (AraN).

It localises to the cell membrane. In terms of biological role, part of the ABC transporter complex AraNPQ involved in the uptake of arabinooligosaccharides. Transports alpha-1,5-arabinooligosaccharides, at least up to four L-arabinosyl units. AraN captures the substrate and delivers it to the two transmembrane components. The protein is Arabinooligosaccharide-binding protein of Bacillus subtilis (strain 168).